We begin with the raw amino-acid sequence, 138 residues long: Small ribosomal subunit protein uS11c (138 aa).

Belongs to the universal ribosomal protein uS11 family. Part of the 30S ribosomal subunit.

Its subcellular location is the plastid. The protein is Small ribosomal subunit protein uS11c of Cuscuta obtusiflora (Peruvian dodder).